Reading from the N-terminus, the 76-residue chain is Precursor of CEP7 (76 aa).

The first 27 residues, M1–G27, serve as a signal peptide directing secretion. Residues R28–D61 constitute a propeptide that is removed on maturation. 2 N-linked (GlcNAc...) asparagine glycosylation sites follow: N37 and N48. Residues L49–H76 are disordered. Hydroxyproline occurs at positions 65, 68, and 72.

It belongs to the C-terminally encoded plant signaling peptide (CEP) family. As to quaternary structure, interacts with CEP receptors (e.g. CEPR1 and CEPR2). Post-translationally, the mature small signaling peptide is generated by proteolytic processing of the longer precursor.

It localises to the secreted. Its subcellular location is the extracellular space. It is found in the apoplast. Extracellular signaling peptide that may regulate primary root growth rate and systemic nitrogen (N)-demand signaling. Mediates up-regulation of genes involved in N uptake and assimilation pathways. The sequence is that of Precursor of CEP7 from Arabidopsis thaliana (Mouse-ear cress).